The chain runs to 285 residues: (3S)-malyl-CoA thioesterase (285 aa).

2 residues coordinate substrate: Arg-70 and Glu-122. Mg(2+) is bound by residues Glu-122 and Asp-148.

The protein belongs to the HpcH/HpaI aldolase family. As to quaternary structure, homodimer or homotrimer. The cofactor is Mg(2+).

It carries out the reaction (S)-malyl-CoA + H2O = (S)-malate + CoA + H(+). Catalyzes the hydrolysis of (3S)-malyl-CoA to (3S)-malate and free CoA. Inactive towards beta-methylmalyl-CoA and other CoA esters. The polypeptide is (3S)-malyl-CoA thioesterase (Cereibacter sphaeroides (strain KD131 / KCTC 12085) (Rhodobacter sphaeroides)).